Here is a 278-residue protein sequence, read N- to C-terminus: HCLS1-associated protein X-1 (278 aa).

At Ser-2 the chain carries N-acetylserine. The required for localization in mitochondria stretch occupies residues 2–43; the sequence is SVFDLFRGFFGFPGPRSHRDPFFGGMTRDDDDDEDDEEEEDS. 2 disordered regions span residues 15–50 and 99–262; these read GPRS…GRES and LPSH…ALDD. A compositionally biased stretch (acidic residues) spans 30-43; sequence DDDDDEDDEEEEDS. Residues 113–278 are involved in HCLS1 binding; that stretch reads TPGVRLREGQ…LLLGRWFRSR (166 aa). Basic and acidic residues predominate over residues 132 to 152; the sequence is PDSHQPRIFEGVLESHAKPES. An involved in CASP9 binding region spans residues 174–205; the sequence is VSPHSRAREDKDLDSQVSQEGLGPLLQPQPKS. The involved in GNA13 binding stretch occupies residues 175–246; sequence SPHSRAREDK…TTVTHQEAHD (72 aa). A required for localization in sarcoplasmic reticulum region spans residues 182 to 278; sequence EDKDLDSQVS…LLLGRWFRSR (97 aa). The segment at 183-278 is involved in PKD2 binding; it reads DKDLDSQVSQ…LLLGRWFRSR (96 aa). Phosphoserine occurs at positions 188 and 191. Residues 202-224 are involved in PLN binding; the sequence is QPKSYFKSISVTKITKPDGTVEE. An involved in ATP2A2 binding region spans residues 202-244; the sequence is QPKSYFKSISVTKITKPDGTVEEHRTVVDSEGRRETTVTHQEA. The segment at 209–278 is mediates interaction with UCP3; that stretch reads SISVTKITKP…LLLGRWFRSR (70 aa). Basic and acidic residues predominate over residues 216-254; the sequence is TKPDGTVEEHRTVVDSEGRRETTVTHQEAHDSSRSDPDP. Residues 269–278 form a required for ITGB6 binding region; that stretch reads LLLGRWFRSR.

Belongs to the HAX1 family. Interacts with ABCB1, ABCB4 and ABCB11. Directly associates with HCLS1/HS1, through binding to its N-terminal region. Interacts with CTTN. Interacts with PKD2. Interacts with GNA13. Interacts with CASP9. Interacts with ITGB6. Interacts with PLN and ATP2A2; these interactions are inhibited by calcium. Interacts with GRB7. Interacts (via C-terminus) with XIAP/BIRC4 (via BIR 2 domain and BIR 3 domain) and this interaction blocks ubiquitination of XIAP/BIRC4. Interacts with TPC2. Interacts with KCNC3. Interacts with XPO1. Interacts with RNF217. Interacts with UCP3; the interaction is direct and calcium-dependent. Interacts with MAPRE2; this interaction regulates cell migration in keratinocytes. In terms of tissue distribution, present in striated muscles (at protein level).

Its subcellular location is the mitochondrion matrix. The protein resides in the endoplasmic reticulum. It localises to the nucleus membrane. It is found in the cytoplasmic vesicle. The protein localises to the cytoplasm. Its subcellular location is the cell cortex. The protein resides in the cell membrane. It localises to the sarcoplasmic reticulum. It is found in the P-body. The protein localises to the nucleus. Functionally, recruits the Arp2/3 complex to the cell cortex and regulates reorganization of the cortical actin cytoskeleton via its interaction with KCNC3 and the Arp2/3 complex. Slows down the rate of inactivation of KCNC3 channels. Promotes GNA13-mediated cell migration. Involved in the clathrin-mediated endocytosis pathway. May be involved in internalization of ABC transporters such as ABCB11. May inhibit CASP9 and CASP3. Promotes cell survival. May regulate intracellular calcium pools. In Rattus norvegicus (Rat), this protein is HCLS1-associated protein X-1 (Hax1).